We begin with the raw amino-acid sequence, 169 residues long: Transcription antitermination protein NusB (169 aa).

The tract at residues 150-169 (AAATSRRTETAGGESNDAGS) is disordered.

Belongs to the NusB family.

Functionally, involved in transcription antitermination. Required for transcription of ribosomal RNA (rRNA) genes. Binds specifically to the boxA antiterminator sequence of the ribosomal RNA (rrn) operons. The polypeptide is Transcription antitermination protein NusB (Rhodococcus jostii (strain RHA1)).